A 284-amino-acid polypeptide reads, in one-letter code: Pantothenate synthetase (284 aa).

Residue 30-37 (MGNLHQGH) coordinates ATP. The active-site Proton donor is the His-37. Gln-61 contacts (R)-pantoate. Gln-61 is a beta-alanine binding site. 149–152 (GQKD) provides a ligand contact to ATP. Gln-155 contacts (R)-pantoate. ATP-binding positions include Val-178 and 186-189 (LSSR).

It belongs to the pantothenate synthetase family. Homodimer.

The protein localises to the cytoplasm. It catalyses the reaction (R)-pantoate + beta-alanine + ATP = (R)-pantothenate + AMP + diphosphate + H(+). It functions in the pathway cofactor biosynthesis; (R)-pantothenate biosynthesis; (R)-pantothenate from (R)-pantoate and beta-alanine: step 1/1. Its function is as follows. Catalyzes the condensation of pantoate with beta-alanine in an ATP-dependent reaction via a pantoyl-adenylate intermediate. In Aeromonas salmonicida (strain A449), this protein is Pantothenate synthetase.